A 363-amino-acid chain; its full sequence is Fructose-bisphosphate aldolase C (363 aa).

Substrate-binding residues include arginine 56 and lysine 147. Catalysis depends on lysine 230, which acts as the Schiff-base intermediate with dihydroxyacetone-P.

This sequence belongs to the class I fructose-bisphosphate aldolase family. In terms of assembly, homotetramer. As to expression, expressed in brain but not in liver or muscle.

The catalysed reaction is beta-D-fructose 1,6-bisphosphate = D-glyceraldehyde 3-phosphate + dihydroxyacetone phosphate. It participates in carbohydrate degradation; glycolysis; D-glyceraldehyde 3-phosphate and glycerone phosphate from D-glucose: step 4/4. The polypeptide is Fructose-bisphosphate aldolase C (aldoc) (Carassius auratus (Goldfish)).